Reading from the N-terminus, the 351-residue chain is Anthranilate phosphoribosyltransferase (351 aa).

5-phospho-alpha-D-ribose 1-diphosphate-binding positions include Gly-80, 83 to 84, Thr-88, 90 to 93, 108 to 116, and Ser-120; these read GD, NIST, and KHGNRSVTS. Gly-80 serves as a coordination point for anthranilate. Position 92 (Ser-92) interacts with Mg(2+). Asn-111 contributes to the anthranilate binding site. Arg-166 contributes to the anthranilate binding site. Residues Asp-229 and Glu-230 each contribute to the Mg(2+) site.

It belongs to the anthranilate phosphoribosyltransferase family. In terms of assembly, homodimer. The cofactor is Mg(2+).

The enzyme catalyses N-(5-phospho-beta-D-ribosyl)anthranilate + diphosphate = 5-phospho-alpha-D-ribose 1-diphosphate + anthranilate. The protein operates within amino-acid biosynthesis; L-tryptophan biosynthesis; L-tryptophan from chorismate: step 2/5. In terms of biological role, catalyzes the transfer of the phosphoribosyl group of 5-phosphorylribose-1-pyrophosphate (PRPP) to anthranilate to yield N-(5'-phosphoribosyl)-anthranilate (PRA). This chain is Anthranilate phosphoribosyltransferase, found in Chlorobium chlorochromatii (strain CaD3).